We begin with the raw amino-acid sequence, 335 residues long: Syntaxin-18 (335 aa).

Topologically, residues 1 to 309 (MAVDITLLFR…EDIREAIKNN (309 aa)) are cytoplasmic. Basic and acidic residues predominate over residues 168–208 (KLEPEPNTKTRESTSSEKVSRSPSKDSEENPATEERPEKIL). Residues 168–226 (KLEPEPNTKTRESTSSEKVSRSPSKDSEENPATEERPEKILAETQPELGTWGDGKGEDE) form a disordered region. The t-SNARE coiled-coil homology domain occupies 243–305 (IGEMNSLFDE…KEGNEDIREA (63 aa)). Residues 310–330 (AGFRVWILFFLVMCSFSLLFL) traverse the membrane as a helical; Anchor for type IV membrane protein segment. Residues 331–335 (DWYDS) lie on the Vesicular side of the membrane.

Belongs to the syntaxin family. Component of a SNARE complex consisting of STX18, USE1L, BNIP1/SEC20L, and SEC22B. RINT1/TIP20L and ZW10 are associated with the complex through interaction with BNIP1/SEC20L. Interacts directly with USE1L and BNIP1/SEC20L.

The protein localises to the endoplasmic reticulum membrane. Its subcellular location is the golgi apparatus membrane. Functionally, syntaxin that may be involved in targeting and fusion of Golgi-derived retrograde transport vesicles with the ER. This is Syntaxin-18 (STX18) from Pongo abelii (Sumatran orangutan).